A 516-amino-acid polypeptide reads, in one-letter code: Protein P54 (516 aa).

An N-terminal signal peptide occupies residues 1–27; it reads MKKSLLSAVMLSSIALTAVGSPIAAAA. The segment at 208 to 397 is disordered; the sequence is ATAEDKKADL…PAPAPAPNPS (190 aa). Over residues 210–236 the composition is skewed to basic and acidic residues; it reads AEDKKADLNRKKAEAEAEQARIREQAR. 2 stretches are compositionally biased toward low complexity: residues 237–247 and 257–380; these read LAEQARQQAAQ and QAAA…TVTP. Residues 381-395 are compositionally biased toward pro residues; it reads APTPTPTPAPAPAPN. The NlpC/P60 domain occupies 399–516; sequence SVNGAAIVAE…WYTPDFAVSM (118 aa). Cys-429 serves as the catalytic Nucleophile. His-480 acts as the Proton acceptor in catalysis. The active site involves His-492.

The protein belongs to the peptidase C40 family.

The protein resides in the secreted. Its subcellular location is the cell wall. The protein is Protein P54 of Enterococcus faecium (Streptococcus faecium).